Consider the following 677-residue polypeptide: Elongation factor G 2 (677 aa).

The region spanning 8 to 283 is the tr-type G domain; the sequence is SRIRNIGIIA…AVVNFLPSPE (276 aa). Residues 17–24, 81–85, and 135–138 each bind GTP; these read AHIDAGKT, DTPGH, and NKMD.

This sequence belongs to the TRAFAC class translation factor GTPase superfamily. Classic translation factor GTPase family. EF-G/EF-2 subfamily.

The protein localises to the cytoplasm. In terms of biological role, catalyzes the GTP-dependent ribosomal translocation step during translation elongation. During this step, the ribosome changes from the pre-translocational (PRE) to the post-translocational (POST) state as the newly formed A-site-bound peptidyl-tRNA and P-site-bound deacylated tRNA move to the P and E sites, respectively. Catalyzes the coordinated movement of the two tRNA molecules, the mRNA and conformational changes in the ribosome. This is Elongation factor G 2 from Syntrophus aciditrophicus (strain SB).